A 515-amino-acid chain; its full sequence is Sodium/hydrogen exchanger 9B1 (515 aa).

The segment covering 1-10 has biased composition (basic and acidic residues); that stretch reads MHTTESKNEH. Residues 1–32 are disordered; the sequence is MHTTESKNEHLEDENFQTSTTPQSLIDPNNTA. The span at 16–32 shows a compositional bias: polar residues; it reads FQTSTTPQSLIDPNNTA. 13 helical membrane passes run 66–86, 95–115, 116–136, 152–172, 187–207, 215–235, 260–280, 284–304, 337–357, 368–388, 407–427, 431–451, and 472–492; these read VIITNGVILFVIWCMTWSILG, LFGLFIIFYSAIIGGKILQLI, RIPLVPPLPPLLGMLLAGFTI, WSSILRSIALTIILIRAGLGL, LAVGPCLMEASAAAVFSHFIM, FLLGFVLGAVSPAVVVPYMMV, ILAITGFNTCLSIVFSSGGIL, IASIRNVCISLLAGIVLGFFV, IGLHGSGGLCTLVLSFIAGTK, IITTVWDIFQPLLFGLVGAEV, LALCVRILTTYLLMCFAGFSF, IFIALAWMPKATVQAVLGPLA, and VAFLAILITAPNGALLMGILG.

This sequence belongs to the monovalent cation:proton antiporter 1 (CPA1) transporter (TC 2.A.36) family. Expressed only in the testis.

The protein localises to the cell projection. It localises to the cilium. The protein resides in the flagellum membrane. Sperm-specific Na(+)/H(+) exchanger involved in intracellular pH regulation of spermatozoa. Involved in sperm motility and fertility. The chain is Sodium/hydrogen exchanger 9B1 from Homo sapiens (Human).